We begin with the raw amino-acid sequence, 412 residues long: tRNA pseudouridine synthase Pus10 (412 aa).

Positions H73 to P197 constitute a THUMP domain. Positions 308 and 376 each coordinate substrate.

This sequence belongs to the pseudouridine synthase Pus10 family.

The catalysed reaction is uridine(54) in tRNA = pseudouridine(54) in tRNA. It carries out the reaction uridine(55) in tRNA = pseudouridine(55) in tRNA. Its function is as follows. Responsible for synthesis of pseudouridine from uracil-54 and uracil-55 in the psi GC loop of transfer RNAs. The polypeptide is tRNA pseudouridine synthase Pus10 (Vulcanisaeta distributa (strain DSM 14429 / JCM 11212 / NBRC 100878 / IC-017)).